Consider the following 433-residue polypeptide: Glutamate-1-semialdehyde 2,1-aminomutase (433 aa).

Residue K273 is modified to N6-(pyridoxal phosphate)lysine.

It belongs to the class-III pyridoxal-phosphate-dependent aminotransferase family. HemL subfamily. In terms of assembly, homodimer. Pyridoxal 5'-phosphate serves as cofactor.

The protein resides in the cytoplasm. The enzyme catalyses (S)-4-amino-5-oxopentanoate = 5-aminolevulinate. The protein operates within porphyrin-containing compound metabolism; protoporphyrin-IX biosynthesis; 5-aminolevulinate from L-glutamyl-tRNA(Glu): step 2/2. It functions in the pathway porphyrin-containing compound metabolism; chlorophyll biosynthesis. The polypeptide is Glutamate-1-semialdehyde 2,1-aminomutase (Rippkaea orientalis (strain PCC 8801 / RF-1) (Cyanothece sp. (strain PCC 8801))).